The sequence spans 73 residues: Accessory secretory protein Asp5 (73 aa).

An N-terminal signal peptide occupies residues 1–30 (MQKLLLILTILLALILITLVISLPRENQQF). The chain crosses the membrane as a helical span at residues 52 to 72 (IILLIVSILLFLTLIFYMIQT).

Part of the accessory SecA2/SecY2 protein translocation apparatus required to export cell wall protein GspB.

Its subcellular location is the cell membrane. Its function is as follows. Part of the accessory SecA2/SecY2 system specifically required to export GspB, a serine-rich repeat cell wall protein encoded upstream in the same operon. In Streptococcus gordonii, this protein is Accessory secretory protein Asp5 (asp5).